Here is a 501-residue protein sequence, read N- to C-terminus: Aspartate--tRNA ligase, cytoplasmic (501 aa).

Threonine 52 carries the phosphothreonine modification. Residue lysine 74 is modified to N6-acetyllysine. Residue glutamate 229 participates in L-aspartate binding. Phosphoserine is present on serine 249. Positions 251–254 (QLYK) are aspartate. Residue arginine 273 participates in L-aspartate binding. Residues 273–275 (RAE) and 281–283 (RHL) each bind ATP. The residue at position 374 (lysine 374) is an N6-acetyllysine. The binding site for the 3'-end of tRNA stretch occupies residues 411-415 (KQSNS). Glutamate 424 contributes to the ATP binding site. The L-aspartate site is built by serine 427 and arginine 431. ATP is bound at residue 472 to 475 (GLER). Threonine 500 carries the post-translational modification Phosphothreonine; by PKA.

This sequence belongs to the class-II aminoacyl-tRNA synthetase family. Type 2 subfamily. In terms of assembly, homodimer. Part of a multisubunit complex that groups tRNA ligases for Arg (RARS1), Asp (DARS1), Gln (QARS1), Ile (IARS1), Leu (LARS1), Lys (KARS1), Met (MARS1) the bifunctional ligase for Glu and Pro (EPRS1) and the auxiliary subunits AIMP1/p43, AIMP2/p38 and EEF1E1/p18.

The protein resides in the cytoplasm. It carries out the reaction tRNA(Asp) + L-aspartate + ATP = L-aspartyl-tRNA(Asp) + AMP + diphosphate. Catalyzes the specific attachment of an amino acid to its cognate tRNA in a 2 step reaction: the amino acid (AA) is first activated by ATP to form AA-AMP and then transferred to the acceptor end of the tRNA. In Bos taurus (Bovine), this protein is Aspartate--tRNA ligase, cytoplasmic (DARS1).